The chain runs to 1082 residues: CRISPR-associated endonuclease Cas9 (1082 aa).

The For RuvC-like nuclease domain role is filled by D16. Positions 16, 504, and 508 each coordinate Mg(2+). The 156-residue stretch at 512-667 (SFKDRKEIEK…DEDGFKERNL (156 aa)) folds into the HNH Cas9-type domain. H588 acts as the Proton acceptor for HNH nuclease domain in catalysis. H723 is a binding site for Mg(2+).

This sequence belongs to the CRISPR-associated protein Cas9 family. Subtype II-C subfamily. As to quaternary structure, monomer. Binds crRNA and tracrRNA. Mg(2+) serves as cofactor.

CRISPR (clustered regularly interspaced short palindromic repeat) is an adaptive immune system that provides protection against mobile genetic elements (viruses, transposable elements and conjugative plasmids). CRISPR clusters contain spacers, sequences complementary to antecedent mobile elements, and target invading nucleic acids. CRISPR clusters are transcribed and processed into CRISPR RNA (crRNA). In type II CRISPR systems correct processing of pre-crRNA requires a trans-encoded small RNA (tracrRNA), endogenous ribonuclease 3 (rnc) and this protein. The tracrRNA serves as a guide for ribonuclease 3-aided processing of pre-crRNA. Subsequently Cas9/crRNA/tracrRNA endonucleolytically cleaves linear or circular dsDNA target complementary to the spacer; Cas9 is inactive in the absence of the 2 guide RNAs (gRNA). Cas9 recognizes the protospacer adjacent motif (PAM) in the CRISPR repeat sequences to help distinguish self versus nonself, as targets within the bacterial CRISPR locus do not have PAMs. PAM recognition is also required for catalytic activity. Cuts target DNA in Cas9:gRNAs mixing experiments with C.jejuni strain NCTC 11168 and P.multocoda strain Pm70. This is CRISPR-associated endonuclease Cas9 from Neisseria meningitidis serogroup A / serotype 4A (strain DSM 15465 / Z2491).